We begin with the raw amino-acid sequence, 332 residues long: tRNA N6-adenosine threonylcarbamoyltransferase (332 aa).

The Fe cation site is built by H107 and H111. Substrate contacts are provided by residues L129–G133, D162, G175, and N267. D295 provides a ligand contact to Fe cation.

It belongs to the KAE1 / TsaD family. Requires Fe(2+) as cofactor.

It is found in the cytoplasm. The catalysed reaction is L-threonylcarbamoyladenylate + adenosine(37) in tRNA = N(6)-L-threonylcarbamoyladenosine(37) in tRNA + AMP + H(+). Its function is as follows. Required for the formation of a threonylcarbamoyl group on adenosine at position 37 (t(6)A37) in tRNAs that read codons beginning with adenine. Is involved in the transfer of the threonylcarbamoyl moiety of threonylcarbamoyl-AMP (TC-AMP) to the N6 group of A37, together with TsaE and TsaB. TsaD likely plays a direct catalytic role in this reaction. This chain is tRNA N6-adenosine threonylcarbamoyltransferase, found in Campylobacter hominis (strain ATCC BAA-381 / DSM 21671 / CCUG 45161 / LMG 19568 / NCTC 13146 / CH001A).